The primary structure comprises 459 residues: Putrescine aminotransferase (459 aa).

Pyridoxal 5'-phosphate-binding positions include 150-151 and Gln274; that span reads GT. Lys300 carries the N6-(pyridoxal phosphate)lysine modification. Thr332 is a binding site for pyridoxal 5'-phosphate.

Belongs to the class-III pyridoxal-phosphate-dependent aminotransferase family. Putrescine aminotransferase subfamily. Requires pyridoxal 5'-phosphate as cofactor.

It carries out the reaction an alkane-alpha,omega-diamine + 2-oxoglutarate = an omega-aminoaldehyde + L-glutamate. The enzyme catalyses putrescine + 2-oxoglutarate = 1-pyrroline + L-glutamate + H2O. The catalysed reaction is cadaverine + 2-oxoglutarate = 5-aminopentanal + L-glutamate. The protein operates within amine and polyamine degradation; putrescine degradation; 4-aminobutanal from putrescine (transaminase route): step 1/1. In terms of biological role, catalyzes the aminotransferase reaction from putrescine to 2-oxoglutarate, leading to glutamate and 4-aminobutanal, which spontaneously cyclizes to form 1-pyrroline. This is the first step in one of two pathways for putrescine degradation, where putrescine is converted into 4-aminobutanoate (gamma-aminobutyrate or GABA) via 4-aminobutanal. Also functions as a cadaverine transaminase in a a L-lysine degradation pathway to succinate that proceeds via cadaverine, glutarate and L-2-hydroxyglutarate. The protein is Putrescine aminotransferase of Shigella flexneri serotype 5b (strain 8401).